A 152-amino-acid chain; its full sequence is TOMM20-like protein 1 (152 aa).

Residues 1-6 lie on the Mitochondrial intermembrane side of the membrane; it reads MPSVRL. The chain crosses the membrane as a helical span at residues 7 to 27; the sequence is GVGLLAGLAAGGAVVLLSYCV. Residues 28-152 lie on the Cytoplasmic side of the membrane; that stretch reads YLDWRRHRDP…STEHLKDDPD (125 aa).

This sequence belongs to the Tom20 family.

It is found in the mitochondrion outer membrane. The chain is TOMM20-like protein 1 (Tomm20l) from Mus musculus (Mouse).